The following is a 75-amino-acid chain: MNRSKKNSRKRLPAIRSGEFIDYRNISLLRRFVSEQGRILSRRTNRLTSKQQRVLTAAIKQARILASLPFPNSEN.

This sequence belongs to the bacterial ribosomal protein bS18 family. As to quaternary structure, part of the 30S ribosomal subunit.

It is found in the plastid. This Aneura mirabilis (Parasitic liverwort) protein is Small ribosomal subunit protein bS18c.